The following is a 270-amino-acid chain: Phospholysine phosphohistidine inorganic pyrophosphate phosphatase (270 aa).

Mg(2+) is bound by residues Asp-17 and Ser-19. Substrate is bound by residues 17–19, 54–55, and Lys-189; these read DIS and TN. Asp-214 contacts Mg(2+).

It belongs to the HAD-like hydrolase superfamily. As to quaternary structure, homodimer. The cofactor is Mg(2+).

The protein resides in the cytoplasm. It localises to the nucleus. It carries out the reaction diphosphate + H2O = 2 phosphate + H(+). In terms of biological role, phosphatase that hydrolyzes imidodiphosphate, 3-phosphohistidine and 6-phospholysine. Has broad substrate specificity and can also hydrolyze inorganic diphosphate, but with lower efficiency. In Mus musculus (Mouse), this protein is Phospholysine phosphohistidine inorganic pyrophosphate phosphatase (Lhpp).